Here is a 242-residue protein sequence, read N- to C-terminus: Uridylate kinase (242 aa).

17 to 20 (KLGG) lines the ATP pocket. Gly58 serves as a coordination point for UMP. Gly59 and Arg63 together coordinate ATP. UMP-binding positions include Asp78 and 139 to 146 (MGMPYFST). Phe172 and Asp175 together coordinate ATP.

This sequence belongs to the UMP kinase family. As to quaternary structure, homohexamer.

It localises to the cytoplasm. It catalyses the reaction UMP + ATP = UDP + ADP. It functions in the pathway pyrimidine metabolism; CTP biosynthesis via de novo pathway; UDP from UMP (UMPK route): step 1/1. Inhibited by UTP. Its function is as follows. Catalyzes the reversible phosphorylation of UMP to UDP. This Rhodococcus jostii (strain RHA1) protein is Uridylate kinase.